The sequence spans 114 residues: Ribonuclease U2 (114 aa).

3 disulfide bridges follow: cysteine 1–cysteine 54, cysteine 9–cysteine 113, and cysteine 55–cysteine 96. Ca(2+) is bound by residues aspartate 29, valine 30, alanine 31, asparagine 32, aspartate 37, and tyrosine 39. Position 39–49 (39–49) interacts with substrate; the sequence is YPHQYYDEASE. The active site involves histidine 41. Catalysis depends on glutamate 62, which acts as the Proton acceptor. Residue arginine 85 coordinates substrate. Histidine 101 acts as the Proton donor in catalysis. 108–110 serves as a coordination point for substrate; it reads DGF.

It belongs to the ribonuclease U2 family.

The catalysed reaction is [RNA] containing adenosine + H2O = an [RNA fragment]-3'-adenosine-3'-phosphate + a 5'-hydroxy-ribonucleotide-3'-[RNA fragment].. It carries out the reaction [RNA] containing guanosine + H2O = an [RNA fragment]-3'-guanosine-3'-phosphate + a 5'-hydroxy-ribonucleotide-3'-[RNA fragment].. This Ustilago sphaerogena (Smut fungus) protein is Ribonuclease U2 (RNU2).